We begin with the raw amino-acid sequence, 299 residues long: ATP phosphoribosyltransferase (299 aa).

This sequence belongs to the ATP phosphoribosyltransferase family. Long subfamily. Equilibrium between an active dimeric form, an inactive hexameric form and higher aggregates. Interconversion between the various forms is largely reversible and is influenced by the natural substrates and inhibitors of the enzyme. Mg(2+) serves as cofactor.

The protein resides in the cytoplasm. It catalyses the reaction 1-(5-phospho-beta-D-ribosyl)-ATP + diphosphate = 5-phospho-alpha-D-ribose 1-diphosphate + ATP. It participates in amino-acid biosynthesis; L-histidine biosynthesis; L-histidine from 5-phospho-alpha-D-ribose 1-diphosphate: step 1/9. Its activity is regulated as follows. Feedback inhibited by histidine. Its function is as follows. Catalyzes the condensation of ATP and 5-phosphoribose 1-diphosphate to form N'-(5'-phosphoribosyl)-ATP (PR-ATP). Has a crucial role in the pathway because the rate of histidine biosynthesis seems to be controlled primarily by regulation of HisG enzymatic activity. The chain is ATP phosphoribosyltransferase (hisG) from Buchnera aphidicola subsp. Schizaphis graminum (strain Sg).